The primary structure comprises 135 residues: MATFHFDLVSPEMVAFSGEVDQVDIPGAEGDFGVLAGHAPVVAVIRPGILTVTAGGAQQKIVVLGGIAEVSEKGLTVLADVATATADVDMQDFAETITTMEQQLPGKVGDELDRSIERLDHYKSIQHQLSTTAMH.

Belongs to the ATPase epsilon chain family. As to quaternary structure, F-type ATPases have 2 components, CF(1) - the catalytic core - and CF(0) - the membrane proton channel. CF(1) has five subunits: alpha(3), beta(3), gamma(1), delta(1), epsilon(1). CF(0) has three main subunits: a, b and c.

It localises to the cell inner membrane. In terms of biological role, produces ATP from ADP in the presence of a proton gradient across the membrane. In Rhodopseudomonas palustris (strain HaA2), this protein is ATP synthase epsilon chain.